A 421-amino-acid polypeptide reads, in one-letter code: BEN domain-containing protein 5 (421 aa).

K133 is subject to N6-acetyllysine. A coiled-coil region spans residues 180 to 243; it reads RALYEELLRN…LNRRLQDVLL (64 aa). A Glycyl lysine isopeptide (Lys-Gly) (interchain with G-Cter in SUMO2) cross-link involves residue K258. The BEN domain maps to 302–408; that stretch reads GSGIWVDEEK…EKIMDINKSC (107 aa).

Functionally, acts as a transcriptional repressor. The polypeptide is BEN domain-containing protein 5 (BEND5) (Homo sapiens (Human)).